Here is a 549-residue protein sequence, read N- to C-terminus: Cytoplasmic trehalase (549 aa).

Substrate is bound by residues R168, 175–176, N212, 221–223, 292–294, and G324; these read WD, RSQ, and RDE. Active-site proton donor/acceptor residues include D326 and E509. A substrate-binding site is contributed by E525.

It belongs to the glycosyl hydrolase 37 family. In terms of assembly, monomer.

It localises to the cytoplasm. The catalysed reaction is alpha,alpha-trehalose + H2O = alpha-D-glucose + beta-D-glucose. The protein operates within glycan degradation; trehalose degradation; D-glucose from alpha,alpha-trehalose: step 1/1. Functionally, hydrolyzes trehalose to glucose. Could be involved, in cells returning to low osmolarity conditions, in the utilization of the accumulated cytoplasmic trehalose, which was synthesized in response to high osmolarity. This chain is Cytoplasmic trehalase, found in Escherichia coli O139:H28 (strain E24377A / ETEC).